Here is an 883-residue protein sequence, read N- to C-terminus: Valine--tRNA ligase (883 aa).

The 'HIGH' region motif lies at Pro-46–His-56. The 'KMSKS' region motif lies at Lys-520–Ser-524. Lys-523 provides a ligand contact to ATP. Positions Leu-809–Arg-844 form a coiled coil.

It belongs to the class-I aminoacyl-tRNA synthetase family. ValS type 1 subfamily. As to quaternary structure, monomer.

It localises to the cytoplasm. It catalyses the reaction tRNA(Val) + L-valine + ATP = L-valyl-tRNA(Val) + AMP + diphosphate. Catalyzes the attachment of valine to tRNA(Val). As ValRS can inadvertently accommodate and process structurally similar amino acids such as threonine, to avoid such errors, it has a 'posttransfer' editing activity that hydrolyzes mischarged Thr-tRNA(Val) in a tRNA-dependent manner. The polypeptide is Valine--tRNA ligase (Streptococcus thermophilus (strain CNRZ 1066)).